Consider the following 250-residue polypeptide: Phosphoribosylaminoimidazole-succinocarboxamide synthase (250 aa).

The protein belongs to the SAICAR synthetase family.

The catalysed reaction is 5-amino-1-(5-phospho-D-ribosyl)imidazole-4-carboxylate + L-aspartate + ATP = (2S)-2-[5-amino-1-(5-phospho-beta-D-ribosyl)imidazole-4-carboxamido]succinate + ADP + phosphate + 2 H(+). The protein operates within purine metabolism; IMP biosynthesis via de novo pathway; 5-amino-1-(5-phospho-D-ribosyl)imidazole-4-carboxamide from 5-amino-1-(5-phospho-D-ribosyl)imidazole-4-carboxylate: step 1/2. This Parasynechococcus marenigrum (strain WH8102) protein is Phosphoribosylaminoimidazole-succinocarboxamide synthase.